Here is a 91-residue protein sequence, read N- to C-terminus: UPF0250 protein NGK_1021 (91 aa).

The protein belongs to the UPF0250 family.

In Neisseria gonorrhoeae (strain NCCP11945), this protein is UPF0250 protein NGK_1021.